We begin with the raw amino-acid sequence, 191 residues long: Small ribosomal subunit protein eS7y (191 aa).

N-acetylmethionine is present on M1. The stretch at 17–50 forms a coiled coil; the sequence is TEFEEQVTQALFDLENTNQELKSELKDLYINQAV.

Belongs to the eukaryotic ribosomal protein eS7 family.

The protein is Small ribosomal subunit protein eS7y (RPS7B) of Arabidopsis thaliana (Mouse-ear cress).